A 432-amino-acid chain; its full sequence is Bifunctional protein GlmU (432 aa).

Residues 1 to 224 (MSEISVIILA…EENFMGINDK (224 aa)) form a pyrophosphorylase region. Residues 9–12 (LAAG), Lys-23, and 82–83 (GT) each bind UDP-N-acetyl-alpha-D-glucosamine. Mg(2+) is bound at residue Asp-103. Residues Gly-136, Glu-150, Asn-165, and Asn-222 each contribute to the UDP-N-acetyl-alpha-D-glucosamine site. Residue Asn-222 participates in Mg(2+) binding. A linker region spans residues 225–245 (FALSKAETIIQNEIKENLMKN). The interval 246–432 (GVLMRLPESI…FFAKFFKEIK (187 aa)) is N-acetyltransferase. The UDP-N-acetyl-alpha-D-glucosamine site is built by Arg-309 and Lys-326. His-337 serves as the catalytic Proton acceptor. Residues Tyr-340 and Asn-351 each coordinate UDP-N-acetyl-alpha-D-glucosamine. Acetyl-CoA is bound by residues 360–361 (NY), Ser-379, Ala-397, and Arg-414.

The protein in the N-terminal section; belongs to the N-acetylglucosamine-1-phosphate uridyltransferase family. In the C-terminal section; belongs to the transferase hexapeptide repeat family. In terms of assembly, homotrimer. Requires Mg(2+) as cofactor.

Its subcellular location is the cytoplasm. It catalyses the reaction alpha-D-glucosamine 1-phosphate + acetyl-CoA = N-acetyl-alpha-D-glucosamine 1-phosphate + CoA + H(+). It carries out the reaction N-acetyl-alpha-D-glucosamine 1-phosphate + UTP + H(+) = UDP-N-acetyl-alpha-D-glucosamine + diphosphate. Its pathway is nucleotide-sugar biosynthesis; UDP-N-acetyl-alpha-D-glucosamine biosynthesis; N-acetyl-alpha-D-glucosamine 1-phosphate from alpha-D-glucosamine 6-phosphate (route II): step 2/2. It participates in nucleotide-sugar biosynthesis; UDP-N-acetyl-alpha-D-glucosamine biosynthesis; UDP-N-acetyl-alpha-D-glucosamine from N-acetyl-alpha-D-glucosamine 1-phosphate: step 1/1. It functions in the pathway bacterial outer membrane biogenesis; LPS lipid A biosynthesis. Its function is as follows. Catalyzes the last two sequential reactions in the de novo biosynthetic pathway for UDP-N-acetylglucosamine (UDP-GlcNAc). The C-terminal domain catalyzes the transfer of acetyl group from acetyl coenzyme A to glucosamine-1-phosphate (GlcN-1-P) to produce N-acetylglucosamine-1-phosphate (GlcNAc-1-P), which is converted into UDP-GlcNAc by the transfer of uridine 5-monophosphate (from uridine 5-triphosphate), a reaction catalyzed by the N-terminal domain. In Campylobacter hominis (strain ATCC BAA-381 / DSM 21671 / CCUG 45161 / LMG 19568 / NCTC 13146 / CH001A), this protein is Bifunctional protein GlmU.